Here is a 296-residue protein sequence, read N- to C-terminus: GTPase Era (296 aa).

The Era-type G domain maps to 7–174 (KCSMNAIVGT…INYLCEISPS (168 aa)). Positions 15 to 22 (GTTNAGKS) are G1. Residue 15 to 22 (GTTNAGKS) participates in GTP binding. Residues 41–45 (QTTRV) form a G2 region. Positions 62–65 (DTPG) are G3. Residues 62-66 (DTPGI) and 124-127 (NKID) each bind GTP. A G4 region spans residues 124–127 (NKID). The G5 stretch occupies residues 153–155 (ISA). The KH type-2 domain occupies 205-282 (LHHELPYSLS…HLFLFVKVRE (78 aa)).

Belongs to the TRAFAC class TrmE-Era-EngA-EngB-Septin-like GTPase superfamily. Era GTPase family. In terms of assembly, monomer.

Its subcellular location is the cytoplasm. The protein localises to the cell inner membrane. Its function is as follows. An essential GTPase that binds both GDP and GTP, with rapid nucleotide exchange. Plays a role in 16S rRNA processing and 30S ribosomal subunit biogenesis and possibly also in cell cycle regulation and energy metabolism. This is GTPase Era from Ehrlichia canis (strain Jake).